We begin with the raw amino-acid sequence, 283 residues long: MTKLITTVKEMQHIVKAAKRSGTTIGFIPTMGALHDGHLTMVRESVSTNDITVVSVFVNPLQFGPNEDFDAYPRQIDKDLELVSEVGADIVFHPAVEDMYPGELGIDVKVGPLADVLEGAKRPGHFDGVVTVVNKLFNIVMPDYAYFGKKDAQQLAIVEQMVKDFNHAVEIIGIDIVREADGLAKSSRNVYLTEQERQEAVHLSKSLLLAQALYQDGERQSKVIIDKVTQYLESHISGRIEEVAVYSYPQLVEQHEITGRIFISLAVKFSKARLIDNIIIGAE.

Position 31-38 (methionine 31–histidine 38) interacts with ATP. Histidine 38 (proton donor) is an active-site residue. Residue glutamine 62 coordinates (R)-pantoate. Beta-alanine is bound at residue glutamine 62. Glycine 148 to aspartate 151 contacts ATP. Glutamine 154 serves as a coordination point for (R)-pantoate. ATP-binding positions include valine 177 and lysine 185–arginine 188.

It belongs to the pantothenate synthetase family. Homodimer.

It localises to the cytoplasm. The catalysed reaction is (R)-pantoate + beta-alanine + ATP = (R)-pantothenate + AMP + diphosphate + H(+). The protein operates within cofactor biosynthesis; (R)-pantothenate biosynthesis; (R)-pantothenate from (R)-pantoate and beta-alanine: step 1/1. Catalyzes the condensation of pantoate with beta-alanine in an ATP-dependent reaction via a pantoyl-adenylate intermediate. The protein is Pantothenate synthetase of Staphylococcus aureus (strain MRSA252).